The following is a 144-amino-acid chain: Bacilliredoxin BCE_4227 (144 aa).

The protein belongs to the bacilliredoxin family.

The chain is Bacilliredoxin BCE_4227 from Bacillus cereus (strain ATCC 10987 / NRS 248).